The chain runs to 621 residues: Chaperone protein HscA homolog (621 aa).

It belongs to the heat shock protein 70 family.

Its function is as follows. Chaperone involved in the maturation of iron-sulfur cluster-containing proteins. Has a low intrinsic ATPase activity which is markedly stimulated by HscB. The chain is Chaperone protein HscA homolog from Acidithiobacillus ferrooxidans (strain ATCC 23270 / DSM 14882 / CIP 104768 / NCIMB 8455) (Ferrobacillus ferrooxidans (strain ATCC 23270)).